Consider the following 225-residue polypeptide: GrpE protein homolog 2, mitochondrial (225 aa).

The transit peptide at 1–32 directs the protein to the mitochondrion; it reads MAVRSLWACRLRVQRLLAWSAAWESKGWPLPF. Lys-142 is modified (N6-acetyllysine).

The protein belongs to the GrpE family. As to quaternary structure, probable component of the PAM complex at least composed of a mitochondrial HSP70 protein, GRPEL1 or GRPEL2, TIMM44, TIMM16/PAM16 and TIMM14/DNAJC19.

It localises to the mitochondrion matrix. Its function is as follows. Essential component of the PAM complex, a complex required for the translocation of transit peptide-containing proteins from the inner membrane into the mitochondrial matrix in an ATP-dependent manner. Seems to control the nucleotide-dependent binding of mitochondrial HSP70 to substrate proteins. Stimulates ATPase activity of mt-HSP70. May also serve to modulate the interconversion of oligomeric (inactive) and monomeric (active) forms of mt-HSP70. This chain is GrpE protein homolog 2, mitochondrial (GRPEL2), found in Pongo abelii (Sumatran orangutan).